A 478-amino-acid polypeptide reads, in one-letter code: GDP-fucose protein O-fucosyltransferase 3 (478 aa).

The Cytoplasmic portion of the chain corresponds to 1–8; sequence MVWIQRRR. A helical; Signal-anchor for type II membrane protein transmembrane segment spans residues 9 to 31; that stretch reads LLASCLCITATVFLLVTLQVVVE. The Lumenal segment spans residues 32–478; sequence LGKFERKKFK…QEFWALVFKD (447 aa). N-linked (GlcNAc...) asparagine glycans are attached at residues Asn110 and Asn168. A disulfide bridge connects residues Cys389 and Cys392.

Belongs to the glycosyltransferase 10 family.

The protein localises to the endoplasmic reticulum membrane. It carries out the reaction L-threonyl-[protein] + GDP-beta-L-fucose = 3-O-(alpha-L-fucosyl)-L-threonyl-[protein] + GDP + H(+). The enzyme catalyses L-seryl-[protein] + GDP-beta-L-fucose = 3-O-(alpha-L-fucosyl)-L-seryl-[protein] + GDP + H(+). Its pathway is protein modification; protein glycosylation. Its function is as follows. Protein O-fucosyltransferase that specifically catalyzes O-fucosylation of serine or threonine residues in EMI domains of target proteins, such as MMRN1, MMRN2 and EMID1. Attaches fucose through an O-glycosidic linkage. O-fucosylation of EMI domain-containing proteins may be required for facilitating protein folding and secretion. May also show alpha-(1,3)-fucosyltransferase activity toward the innermost N-acetyl glucosamine (GlcNAc) residue in biantennary N-glycan acceptors. However, this was tested with a library of synthetic substrates and this activity is unsure in vivo. May be involved in biosynthesis of Lewis X-carrying biantennary N-glycans that regulate neuron stem cell self-renewal during brain development. This Canis lupus familiaris (Dog) protein is GDP-fucose protein O-fucosyltransferase 3 (FUT10).